A 179-amino-acid chain; its full sequence is NADH dehydrogenase [ubiquinone] 1 beta subcomplex subunit 9 (179 aa).

Residue alanine 2 is modified to N-acetylalanine. Serine 85 carries the phosphoserine modification. Residues 136 to 162 (EVKQLQEETPPGGPLTEALPPARKEGD) are disordered.

This sequence belongs to the complex I LYR family. As to quaternary structure, mammalian complex I is composed of 45 different subunits.

It localises to the mitochondrion inner membrane. Its function is as follows. Accessory subunit of the mitochondrial membrane respiratory chain NADH dehydrogenase (Complex I), that is believed to be not involved in catalysis. Complex I functions in the transfer of electrons from NADH to the respiratory chain. The immediate electron acceptor for the enzyme is believed to be ubiquinone. The polypeptide is NADH dehydrogenase [ubiquinone] 1 beta subcomplex subunit 9 (NDUFB9) (Homo sapiens (Human)).